We begin with the raw amino-acid sequence, 462 residues long: Glycogen synthase 1 (462 aa).

Arg6 serves as a coordination point for ADP-alpha-D-glucose.

It belongs to the glycosyltransferase 1 family. Bacterial/plant glycogen synthase subfamily.

It carries out the reaction [(1-&gt;4)-alpha-D-glucosyl](n) + ADP-alpha-D-glucose = [(1-&gt;4)-alpha-D-glucosyl](n+1) + ADP + H(+). It participates in glycan biosynthesis; glycogen biosynthesis. Functionally, synthesizes alpha-1,4-glucan chains using ADP-glucose. The polypeptide is Glycogen synthase 1 (Bradyrhizobium diazoefficiens (strain JCM 10833 / BCRC 13528 / IAM 13628 / NBRC 14792 / USDA 110)).